The sequence spans 212 residues: Ras-related protein Rab-15 (212 aa).

10 residues coordinate GTP: Ser17, Gly18, Val19, Gly20, Lys21, Thr22, Cys23, Ser35, Ser39, and Thr40. Residue Thr22 participates in Mg(2+) binding. 2 consecutive short sequence motifs (switch) follow at residues 31 to 45 (NEFH…GVDF) and 63 to 80 (DTAG…YYRR). Residues Thr40 and Asp63 each contribute to the Mg(2+) site. Residues Gly66, Asn121, Lys122, Asp124, Ser151, and Ala152 each contribute to the GTP site. Positions 192–212 (ELEEDEGKPEGPANSSKTCWC) are disordered. Residues Cys210 and Cys212 are each lipidated (S-geranylgeranyl cysteine). At Cys212 the chain carries Cysteine methyl ester.

Belongs to the small GTPase superfamily. Rab family. In terms of assembly, the GTP bound form of RAB15 interacts with REP15. Interacts (GTP-bound form) with MICAL1, MICAL3, MICALCL, EHBP1 and EHBP1L1. Requires Mg(2+) as cofactor.

The protein resides in the cell membrane. The catalysed reaction is GTP + H2O = GDP + phosphate + H(+). Regulated by guanine nucleotide exchange factors (GEFs) which promote the exchange of bound GDP for free GTP. Regulated by GTPase activating proteins (GAPs) which increase the GTP hydrolysis activity. Inhibited by GDP dissociation inhibitors (GDIs). Its function is as follows. The small GTPases Rab are key regulators of intracellular membrane trafficking, from the formation of transport vesicles to their fusion with membranes. Rabs cycle between an inactive GDP-bound form and an active GTP-bound form that is able to recruit to membranes different sets of downstream effectors directly responsible for vesicle formation, movement, tethering and fusion. RAB15 may act in concert with RAB3A in regulating aspects of synaptic vesicle membrane flow within the nerve terminal. This Mus musculus (Mouse) protein is Ras-related protein Rab-15.